The following is a 237-amino-acid chain: Ribosomal RNA small subunit methyltransferase G (237 aa).

S-adenosyl-L-methionine contacts are provided by residues G78, F83, 129 to 130, and R148; that span reads AE.

The protein belongs to the methyltransferase superfamily. RNA methyltransferase RsmG family.

Its subcellular location is the cytoplasm. Specifically methylates the N7 position of a guanine in 16S rRNA. This is Ribosomal RNA small subunit methyltransferase G from Streptococcus thermophilus (strain CNRZ 1066).